The primary structure comprises 253 residues: 3-deoxy-manno-octulosonate cytidylyltransferase (253 aa).

The protein belongs to the KdsB family.

The protein resides in the cytoplasm. It catalyses the reaction 3-deoxy-alpha-D-manno-oct-2-ulosonate + CTP = CMP-3-deoxy-beta-D-manno-octulosonate + diphosphate. It participates in nucleotide-sugar biosynthesis; CMP-3-deoxy-D-manno-octulosonate biosynthesis; CMP-3-deoxy-D-manno-octulosonate from 3-deoxy-D-manno-octulosonate and CTP: step 1/1. Its pathway is bacterial outer membrane biogenesis; lipopolysaccharide biosynthesis. Its function is as follows. Activates KDO (a required 8-carbon sugar) for incorporation into bacterial lipopolysaccharide in Gram-negative bacteria. This Neisseria gonorrhoeae (strain ATCC 700825 / FA 1090) protein is 3-deoxy-manno-octulosonate cytidylyltransferase.